A 440-amino-acid chain; its full sequence is UDP-N-acetylmuramoylalanine--D-glutamate ligase (440 aa).

Glycine 109–threonine 115 contacts ATP.

The protein belongs to the MurCDEF family.

The protein resides in the cytoplasm. The catalysed reaction is UDP-N-acetyl-alpha-D-muramoyl-L-alanine + D-glutamate + ATP = UDP-N-acetyl-alpha-D-muramoyl-L-alanyl-D-glutamate + ADP + phosphate + H(+). It functions in the pathway cell wall biogenesis; peptidoglycan biosynthesis. Functionally, cell wall formation. Catalyzes the addition of glutamate to the nucleotide precursor UDP-N-acetylmuramoyl-L-alanine (UMA). The protein is UDP-N-acetylmuramoylalanine--D-glutamate ligase of Rubrobacter xylanophilus (strain DSM 9941 / JCM 11954 / NBRC 16129 / PRD-1).